Consider the following 388-residue polypeptide: S-adenosylmethionine synthase (388 aa).

His17 contacts ATP. Asp19 serves as a coordination point for Mg(2+). Residue Glu45 participates in K(+) binding. Residues Glu58 and Gln101 each coordinate L-methionine. The interval 101–111 (QSPDIGQGVDT) is flexible loop. Residues 160-162 (DGK), 226-227 (RF), Asp235, 241-242 (RK), Ala258, and Lys262 each bind ATP. Asp235 contacts L-methionine. Residue Lys266 coordinates L-methionine.

It belongs to the AdoMet synthase family. In terms of assembly, homotetramer; dimer of dimers. Mg(2+) serves as cofactor. K(+) is required as a cofactor.

It localises to the cytoplasm. It carries out the reaction L-methionine + ATP + H2O = S-adenosyl-L-methionine + phosphate + diphosphate. Its pathway is amino-acid biosynthesis; S-adenosyl-L-methionine biosynthesis; S-adenosyl-L-methionine from L-methionine: step 1/1. Functionally, catalyzes the formation of S-adenosylmethionine (AdoMet) from methionine and ATP. The overall synthetic reaction is composed of two sequential steps, AdoMet formation and the subsequent tripolyphosphate hydrolysis which occurs prior to release of AdoMet from the enzyme. This Anaeromyxobacter sp. (strain K) protein is S-adenosylmethionine synthase.